We begin with the raw amino-acid sequence, 348 residues long: Isopentenyl-diphosphate delta-isomerase (348 aa).

5-6 (RK) is a substrate binding site. Residues Ser-61, 62-64 (SMT), Ser-92, and Asn-120 contribute to the FMN site. 92 to 94 (SMR) provides a ligand contact to substrate. Gln-159 provides a ligand contact to substrate. Glu-160 contributes to the Mg(2+) binding site. FMN-binding positions include Lys-189, Ser-214, Thr-219, 269–271 (GLR), and 290–291 (AR).

This sequence belongs to the IPP isomerase type 2 family. In terms of assembly, homooctamer. Dimer of tetramers. FMN serves as cofactor. NADPH is required as a cofactor. It depends on Mg(2+) as a cofactor.

The protein localises to the cytoplasm. The catalysed reaction is isopentenyl diphosphate = dimethylallyl diphosphate. In terms of biological role, involved in the biosynthesis of isoprenoids. Catalyzes the 1,3-allylic rearrangement of the homoallylic substrate isopentenyl (IPP) to its allylic isomer, dimethylallyl diphosphate (DMAPP). The sequence is that of Isopentenyl-diphosphate delta-isomerase from Thermoplasma acidophilum (strain ATCC 25905 / DSM 1728 / JCM 9062 / NBRC 15155 / AMRC-C165).